Reading from the N-terminus, the 1207-residue chain is DNA-directed RNA polymerase subunit beta' (1207 aa).

Zn(2+)-binding residues include C60, C62, C75, and C78. The Mg(2+) site is built by D450, D452, and D454. The Zn(2+) site is built by C818, C892, C899, and C902.

Belongs to the RNA polymerase beta' chain family. In terms of assembly, the RNAP catalytic core consists of 2 alpha, 1 beta, 1 beta' and 1 omega subunit. When a sigma factor is associated with the core the holoenzyme is formed, which can initiate transcription. Mg(2+) serves as cofactor. The cofactor is Zn(2+).

It carries out the reaction RNA(n) + a ribonucleoside 5'-triphosphate = RNA(n+1) + diphosphate. In terms of biological role, DNA-dependent RNA polymerase catalyzes the transcription of DNA into RNA using the four ribonucleoside triphosphates as substrates. This chain is DNA-directed RNA polymerase subunit beta', found in Lactococcus lactis subsp. lactis (strain IL1403) (Streptococcus lactis).